Here is a 119-residue protein sequence, read N- to C-terminus: Large ribosomal subunit protein bL19 (119 aa).

The protein belongs to the bacterial ribosomal protein bL19 family.

Its function is as follows. This protein is located at the 30S-50S ribosomal subunit interface and may play a role in the structure and function of the aminoacyl-tRNA binding site. The protein is Large ribosomal subunit protein bL19 of Treponema denticola (strain ATCC 35405 / DSM 14222 / CIP 103919 / JCM 8153 / KCTC 15104).